The chain runs to 418 residues: Diacylglycerol O-acyltransferase 1 (418 aa).

The interval 1-30 is disordered; that stretch reads MSGTFNDIRRRKKEEGSPTAGITERHENKS. The Cytoplasmic portion of the chain corresponds to 1–71; it reads MSGTFNDIRR…LAVAWHTSSF (71 aa). Phosphoserine is present on Ser-17. The chain crosses the membrane as a helical span at residues 72–92; sequence VLFSIFTLFAISTPALWVLAI. Topologically, residues 93–186 are lumenal; that stretch reads PYMIYFFFDR…DYRNQECTGP (94 aa). The N-linked (GlcNAc...) asparagine glycan is linked to Asn-173. Residues 187–207 form a helical membrane-spanning segment; that stretch reads TYLFGYHPHGIGALGAFGAFA. Topologically, residues 208 to 215 are cytoplasmic; that stretch reads TEGCNYSK. The helical transmembrane segment at 216–236 threads the bilayer; the sequence is IFPGIPISLMTLVTQFHIPLY. The Lumenal segment spans residues 237 to 289; sequence RDYLLALGISSVSRKNALRTLSKNQSICIVVGGARESLLSSTNGTQLILNKRK. 2 N-linked (GlcNAc...) asparagine glycosylation sites follow: Asn-260 and Asn-279. A helical membrane pass occupies residues 290–310; sequence GFIKLAIQTGNINLVPVFAFG. Over 311–418 the chain is Cytoplasmic; sequence EVDCYNVLST…VPDAELKIVG (108 aa).

The protein belongs to the diacylglycerol acyltransferase family.

The protein resides in the lipid droplet. Its subcellular location is the endoplasmic reticulum membrane. The enzyme catalyses an acyl-CoA + a 1,2-diacyl-sn-glycerol = a triacyl-sn-glycerol + CoA. It catalyses the reaction a 2-acylglycerol + an acyl-CoA = a 1,2-diacylglycerol + CoA. It carries out the reaction 2-(9Z-octadecenoyl)-glycerol + (9Z)-octadecenoyl-CoA = 1,2-di-(9Z-octadecenoyl)-glycerol + CoA. It participates in glycerolipid metabolism; triacylglycerol biosynthesis. In terms of biological role, catalyzes the terminal and only committed step in triacylglycerol (TAG) synthesis by using diacylglycerol (DAG) and fatty acyl-CoA as substrates. Required for storage lipid synthesis. Major DAG esterifying enzyme in stationary phase when TAG production is particularly active. Involved in lipid particle synthesis from the endoplasmic reticulum, promoting localized TAG production at discrete ER subdomains, and in ergosterol biosynthesis. Also has monoacylglycerol acyltransferase (MGAT) activity, catalyzing the acyl-CoA-dependent esterification of monoacylglycerol to diacylglycerol. Can also utilize ceramide instead of DAG, acylating the ceramides by attaching a fatty acid to the hydroxy group on the first carbon atom of the long-chain base to produce 1-O-acylceramides. This is Diacylglycerol O-acyltransferase 1 (DGA1) from Saccharomyces cerevisiae (strain ATCC 204508 / S288c) (Baker's yeast).